The primary structure comprises 227 residues: Adenylate kinase (227 aa).

21–26 is an ATP binding site; it reads GAGKGT. Positions 41-70 are NMP; it reads ATGDMLRSQVAKQTPLGIEAKKIMDDGKLV. AMP-binding positions include T42, R47, 68 to 70, 97 to 100, and Q104; these read KLV and GFPR. Residues 138 to 175 are LID; it reads GRLVHPASGRSYHKVFNPPKTEMKDDITGEDLVQRSDD. ATP-binding positions include R139 and 148–149; that span reads SY. 2 residues coordinate AMP: R172 and R183. An ATP-binding site is contributed by Q211.

The protein belongs to the adenylate kinase family. AK2 subfamily. As to quaternary structure, monomer.

The protein localises to the cytoplasm. Its subcellular location is the cytosol. It is found in the mitochondrion intermembrane space. It catalyses the reaction AMP + ATP = 2 ADP. Its function is as follows. Catalyzes the reversible transfer of the terminal phosphate group between ATP and AMP. Plays an important role in cellular energy homeostasis and in adenine nucleotide metabolism. Adenylate kinase activity is critical for regulation of the phosphate utilization and the AMP de novo biosynthesis pathways. In Kluyveromyces lactis (strain ATCC 8585 / CBS 2359 / DSM 70799 / NBRC 1267 / NRRL Y-1140 / WM37) (Yeast), this protein is Adenylate kinase.